The primary structure comprises 271 residues: Proteasome inhibitor PI31 subunit (271 aa).

An N-acetylalanine modification is found at Ala-2. The segment at 2 to 150 is important for homodimerization and interaction with FBXO7; that stretch reads AGLEVLFASA…PIHEQWEKAR (149 aa). A phosphoserine mark is found at Ser-153 and Ser-189. Arg-205 bears the Omega-N-methylarginine mark. Position 219 is an asymmetric dimethylarginine (Arg-219). Residues 226–271 are disordered; the sequence is SGLPNRLPPGAVPPGARFDPFGPIGTSPSGPNPDHLPPPGYDDMYL. Arg-231 is modified (omega-N-methylarginine). Position 252 is a phosphoserine (Ser-252). The span at 255-265 shows a compositional bias: pro residues; that stretch reads GPNPDHLPPPG.

Belongs to the proteasome inhibitor PI31 family. Monomer and homodimer. Interacts with FBXO7.

Its subcellular location is the cytoplasm. The protein resides in the endoplasmic reticulum. Functionally, plays an important role in control of proteasome function. Inhibits the hydrolysis of protein and peptide substrates by the 20S proteasome. Also inhibits the activation of the proteasome by the proteasome regulatory proteins PA700 and PA28. This Mus musculus (Mouse) protein is Proteasome inhibitor PI31 subunit (Psmf1).